The following is a 539-amino-acid chain: F-box/WD-40 repeat-containing protein At5g21040 (539 aa).

Residues 65-111 (STTIIDLPQALISEILNCLDPKELGLVSCVSTYLHRLASEHHAWKEF) enclose the F-box domain. WD repeat units lie at residues 160–199 (GHTE…SIAA), 201–239 (KPLG…RNLF), 255–292 (GHEG…CVKT), 294–330 (RHSD…PLAI), 334–373 (AHEG…SETS), 382–419 (PHTS…KTNR), and 433–477 (PPQR…EIER). The segment at 505 to 539 (GRPDQCSIAAHKNPINGERNRAWHSKRRASGKAKA) is disordered. Positions 526-539 (AWHSKRRASGKAKA) are enriched in basic residues.

This chain is F-box/WD-40 repeat-containing protein At5g21040, found in Arabidopsis thaliana (Mouse-ear cress).